The sequence spans 518 residues: Calcium and calcium/calmodulin-dependent serine/threonine-protein kinase (518 aa).

Residues 13 to 300 (YEISEILGRG…AQELLSHPWV (288 aa)) enclose the Protein kinase domain. ATP-binding positions include 19–27 (LGRGGFSVV) and K44. D165 acts as the Proton acceptor in catalysis. Residue T265 is modified to Phosphothreonine. Residues 323–336 (ARRKLRAAAIASVW) form a calmodulin-binding region. A coiled-coil region spans residues 344–365 (TKKLRSLVGTYDLKEEEIESLR). EF-hand domains follow at residues 394–429 (SLIPLAPRIFDLFDNNRDGTIDMREILCGFSSLKNS), 430–465 (KGDDALRLCFQMYDTDRSGCITKEEVASMLCALPEE), and 472–507 (TEPGKLDEIFDLMDANSDGKVTFEEFKAAMQRDSSL). Ca(2+) contacts are provided by D407, N409, D411, T413, E418, D443, D445, S447, C449, E454, D485, N487, D489, K491, and E496.

The protein belongs to the protein kinase superfamily. CAMK Ser/Thr protein kinase family. CaMK subfamily. As to quaternary structure, interacts with IPD3. Interacts with CIP73. Autophosphorylation stimulated by calcium. Occurs probably by an intermolecular mechanism. As to expression, mainly expressed in roots and nodules. Detected in leaves, stems and cotyledons.

It is found in the nucleus. It carries out the reaction L-seryl-[protein] + ATP = O-phospho-L-seryl-[protein] + ADP + H(+). The catalysed reaction is L-threonyl-[protein] + ATP = O-phospho-L-threonyl-[protein] + ADP + H(+). Its activity is regulated as follows. Activated by calcium/calmodulin binding after calcium-induced autophosphorylation. Its function is as follows. Calcium- and calmodulin-dependent protein kinase necessary and sufficient for dedifferentiation of root cortical cells into nodule initials. Not required for calcium spiking. Acts as central regulator of the nodule organogenesis program. Required for root hair curling and infection thread (IT) formation upon rhizobial infection, and arbuscule formation during arbuscular mycorrhiza (AM) fungal infection. Phosphorylates the downstream target IPD3, a protein required for root infection by symbiotic rhizobia and AM fungi. Phosphorylates the downstream target CIP73, a protein required for root nodule organogenesis. Mediates the phosphorylation of leghemoglobins (e.g. LB1) to modulate their oxygen O(2) affinity, thus regulating the diffusion of oxygen to the bacteroids in nodules. In Lotus japonicus (Lotus corniculatus var. japonicus), this protein is Calcium and calcium/calmodulin-dependent serine/threonine-protein kinase.